The sequence spans 349 residues: N-acetyltaurine hydrolase (349 aa).

A divalent metal cation contacts are provided by His26, His28, Glu169, His201, His230, and Asp298.

It belongs to the metallo-dependent hydrolases superfamily. Phosphotriesterase family. It depends on a divalent metal cation as a cofactor.

Its subcellular location is the cytoplasm. It localises to the cytosol. It catalyses the reaction N-acetyltaurine + H2O = taurine + acetate. The enzyme catalyses N-propanoyltaurine + H2O = propanoate + taurine. It carries out the reaction N-acetyl-L-methionine + H2O = L-methionine + acetate. The catalysed reaction is N-acetyl-L-isoleucine + H2O = L-isoleucine + acetate. It catalyses the reaction N-acetyl-L-leucine + H2O = L-leucine + acetate. The enzyme catalyses N-acetyl-L-valine + H2O = L-valine + acetate. Functionally, N-acetyltaurine hydrolase that catalyzes the hydrolysis of N-acetyltaurine into taurine and acetate. PTER also acts on other N-acetyl amino acids (Met, Ile, Leu, Val) and N-propionyltaurine, but at lower rates. The chain is N-acetyltaurine hydrolase (pter) from Xenopus tropicalis (Western clawed frog).